The sequence spans 303 residues: MKKKILFWVLGILGVLIIGGGIYAYNVYSSVSNTLKEVHQPLKRDQNNSNVGEKVSKSEPVSILLLGADERGEDKGRSDSLMVITLNPKNNSMKTVSIPRDTYTEIVGKGKSDKINHAYAFGGVDMSVATVENFLNVPINYYIEVNMEGFKDIVDAVGGVDVKNDLEFTQDGHHFAKGNIHLTGDQALAFTRMRKQDPRGDFGRQMRQRQVMQGVIKKGASFSSLTGYGDVLAAIQKNVKTNLTQDQMFDMQKNYKDCLKNSEDIQIPGDGHKAADGIWYYYVPDAAKQDLTNKLRTHLEVTK.

Residues 1–4 are Cytoplasmic-facing; that stretch reads MKKK. Residues 5-25 form a helical; Signal-anchor for type II membrane protein membrane-spanning segment; that stretch reads ILFWVLGILGVLIIGGGIYAY. Residues 26-303 are Extracellular-facing; that stretch reads NVYSSVSNTL…KLRTHLEVTK (278 aa).

It belongs to the LytR/CpsA/Psr (LCP) family.

The protein localises to the cell membrane. It participates in cell wall biogenesis. Functionally, may catalyze the final step in cell wall teichoic acid biosynthesis, the transfer of the anionic cell wall polymers (APs) from their lipid-linked precursor to the cell wall peptidoglycan (PG). The polypeptide is Polyisoprenyl-teichoic acid--peptidoglycan teichoic acid transferase TagU (Bacillus cereus (strain ZK / E33L)).